Here is a 311-residue protein sequence, read N- to C-terminus: Aspartate carbamoyltransferase catalytic subunit (311 aa).

Carbamoyl phosphate contacts are provided by Arg55 and Thr56. L-aspartate is bound at residue Lys85. Residues Arg106, His134, and Gln137 each coordinate carbamoyl phosphate. L-aspartate is bound by residues Arg167 and Arg228. Leu266 and Pro267 together coordinate carbamoyl phosphate.

Belongs to the aspartate/ornithine carbamoyltransferase superfamily. ATCase family. In terms of assembly, heterododecamer (2C3:3R2) of six catalytic PyrB chains organized as two trimers (C3), and six regulatory PyrI chains organized as three dimers (R2).

It carries out the reaction carbamoyl phosphate + L-aspartate = N-carbamoyl-L-aspartate + phosphate + H(+). The protein operates within pyrimidine metabolism; UMP biosynthesis via de novo pathway; (S)-dihydroorotate from bicarbonate: step 2/3. Catalyzes the condensation of carbamoyl phosphate and aspartate to form carbamoyl aspartate and inorganic phosphate, the committed step in the de novo pyrimidine nucleotide biosynthesis pathway. This is Aspartate carbamoyltransferase catalytic subunit from Psychromonas ingrahamii (strain DSM 17664 / CCUG 51855 / 37).